The sequence spans 62 residues: Large ribosomal subunit protein eL24 (62 aa).

Zn(2+) contacts are provided by cysteine 7, cysteine 10, cysteine 33, and cysteine 37. Residues 7 to 37 (CDYCGDDIEPGTGTMFVHNDGSTVHFCSAKC) form a C4-type zinc finger.

Belongs to the eukaryotic ribosomal protein eL24 family. Part of the 50S ribosomal subunit. Forms a cluster with proteins L3 and L14. The cofactor is Zn(2+).

In terms of biological role, binds to the 23S rRNA. The sequence is that of Large ribosomal subunit protein eL24 from Halobacterium salinarum (strain ATCC 29341 / DSM 671 / R1).